Consider the following 255-residue polypeptide: uncharacterized protein (255 aa).

Positions 1–23 (MKRLNKLVLGIIFLFLVISITAG) are cleaved as a signal peptide. Residue Cys24 is the site of N-palmitoyl cysteine attachment. Cys24 carries S-diacylglycerol cysteine lipidation.

The protein belongs to the staphylococcal tandem lipoprotein family.

It localises to the cell membrane. This is an uncharacterized protein from Staphylococcus aureus (strain USA300).